A 116-amino-acid polypeptide reads, in one-letter code: Large ribosomal subunit protein bL17 (116 aa).

Belongs to the bacterial ribosomal protein bL17 family. As to quaternary structure, part of the 50S ribosomal subunit. Contacts protein L32.

This chain is Large ribosomal subunit protein bL17, found in Synechococcus sp. (strain JA-2-3B'a(2-13)) (Cyanobacteria bacterium Yellowstone B-Prime).